Consider the following 259-residue polypeptide: NADP-dependent 3-hydroxy acid dehydrogenase (259 aa).

Isoleucine 11 is an NADP(+) binding site. Serine 42 is modified (phosphoserine). The residue at position 43 (threonine 43) is a Phosphothreonine. Residues aspartate 65, asparagine 92, arginine 126, tyrosine 158, lysine 162, and valine 191 each contribute to the NADP(+) site. The active-site Proton acceptor is the tyrosine 158. Lysine 162 functions as the Lowers pKa of active site Tyr in the catalytic mechanism.

It belongs to the short-chain dehydrogenases/reductases (SDR) family. In terms of assembly, homotetramer.

The protein resides in the cytoplasm. It localises to the nucleus. It catalyses the reaction L-allo-threonine + NADP(+) = aminoacetone + CO2 + NADPH. In terms of biological role, NADP-dependent dehydrogenase with broad substrate specificity acting on 3-hydroxy acids. Catalyzes the NADP-dependent oxidation of L-allo-threonine to L-2-amino-3-keto-butyrate, which is spontaneously decarboxylated into aminoacetone. Also acts on D-threonine, L-serine, D-serine, D-3-hydroxyisobutyrate, L-3-hydroxyisobutyrate, D-glycerate and L-glycerate. The chain is NADP-dependent 3-hydroxy acid dehydrogenase from Schizosaccharomyces pombe (strain 972 / ATCC 24843) (Fission yeast).